Consider the following 447-residue polypeptide: Chorismate synthase, chloroplastic (447 aa).

Residues 1–24 are disordered; sequence MASSLSTKPFLSGSRRRSTTDGSG. The transit peptide at 1 to 57 directs the protein to the chloroplast; the sequence is MASSLSTKPFLSGSRRRSTTDGSGWSYFQTSDLRQLSNQSVQISVRRQTAPLKLVVQ.

It belongs to the chorismate synthase family. In terms of assembly, homotetramer. It depends on FMNH2 as a cofactor. Post-translationally, the N-terminus is blocked.

It is found in the plastid. The protein localises to the chloroplast. It catalyses the reaction 5-O-(1-carboxyvinyl)-3-phosphoshikimate = chorismate + phosphate. The protein operates within metabolic intermediate biosynthesis; chorismate biosynthesis; chorismate from D-erythrose 4-phosphate and phosphoenolpyruvate: step 7/7. Its function is as follows. Catalyzes the last common step of the biosynthesis of aromatic amino acids, produced via the shikimic acid pathway. This Capnoides sempervirens (Rock-harlequin) protein is Chorismate synthase, chloroplastic.